The sequence spans 484 residues: Aldehyde dehydrogenase family 3 member F1 (484 aa).

192–197 (GSPKIG) contacts NAD(+). Glutamate 214 serves as the catalytic Proton acceptor. The Nucleophile role is filled by cysteine 252.

This sequence belongs to the aldehyde dehydrogenase family. Homotetramer. As to expression, constituively expressed at low levels.

The enzyme catalyses an aldehyde + NAD(+) + H2O = a carboxylate + NADH + 2 H(+). The chain is Aldehyde dehydrogenase family 3 member F1 (ALDH3F1) from Arabidopsis thaliana (Mouse-ear cress).